The following is a 313-amino-acid chain: Protoheme IX farnesyltransferase (313 aa).

The next 9 helical transmembrane spans lie at 35–55, 56–76, 98–118, 120–140, 153–173, 180–200, 226–246, 248–268, and 292–312; these read LVVF…HPVL, AATS…LNMW, VSSP…VATL, VLVN…YAVV, IVIG…AATG, IILF…LALF, ILLY…LGYF, AAYG…AFNV, and LFLL…AAMI.

This sequence belongs to the UbiA prenyltransferase family. Protoheme IX farnesyltransferase subfamily.

It is found in the cell inner membrane. The catalysed reaction is heme b + (2E,6E)-farnesyl diphosphate + H2O = Fe(II)-heme o + diphosphate. The protein operates within porphyrin-containing compound metabolism; heme O biosynthesis; heme O from protoheme: step 1/1. In terms of biological role, converts heme B (protoheme IX) to heme O by substitution of the vinyl group on carbon 2 of heme B porphyrin ring with a hydroxyethyl farnesyl side group. This is Protoheme IX farnesyltransferase from Afipia carboxidovorans (strain ATCC 49405 / DSM 1227 / KCTC 32145 / OM5) (Oligotropha carboxidovorans).